The primary structure comprises 187 residues: Large ribosomal subunit protein uL6 (187 aa).

It belongs to the universal ribosomal protein uL6 family. As to quaternary structure, part of the 50S ribosomal subunit.

This protein binds to the 23S rRNA, and is important in its secondary structure. It is located near the subunit interface in the base of the L7/L12 stalk, and near the tRNA binding site of the peptidyltransferase center. The chain is Large ribosomal subunit protein uL6 from Chloroflexus aggregans (strain MD-66 / DSM 9485).